The chain runs to 623 residues: Xaa-Pro aminopeptidase 1 (623 aa).

Residue Arg-77 coordinates a peptide. Lys-304 is modified (N6-acetyllysine). Position 395 (His-395) interacts with a peptide. Residues Asp-415, Asp-426, and His-489 each coordinate Mn(2+). Residues His-489, His-498, and Glu-523 each coordinate a peptide. 2 residues coordinate Mn(2+): Glu-523 and Glu-537.

This sequence belongs to the peptidase M24B family. Homodimer. It depends on Mn(2+) as a cofactor.

It localises to the cytoplasm. The protein resides in the cytosol. It carries out the reaction Release of any N-terminal amino acid, including proline, that is linked to proline, even from a dipeptide or tripeptide.. Metalloaminopeptidase that catalyzes the removal of a penultimate prolyl residue from the N-termini of peptides, such as Arg-Pro-Pro. Contributes to the degradation of bradykinin. The chain is Xaa-Pro aminopeptidase 1 (XPNPEP1) from Bos taurus (Bovine).